The sequence spans 280 residues: Undecaprenyl-diphosphatase (280 aa).

The next 8 helical transmembrane spans lie at 1 to 21 (MTIL…FLPV), 41 to 61 (FVRA…LVLY), 87 to 107 (FDLY…GFLF), 115 to 135 (LGSV…MLFV), 147 to 167 (ITYP…FLPG), 186 to 206 (KAAA…ATLL), 225 to 245 (IVLL…IKFF), and 260 to 280 (YRIL…SLAV).

It belongs to the UppP family.

The protein localises to the cell inner membrane. The enzyme catalyses di-trans,octa-cis-undecaprenyl diphosphate + H2O = di-trans,octa-cis-undecaprenyl phosphate + phosphate + H(+). Catalyzes the dephosphorylation of undecaprenyl diphosphate (UPP). Confers resistance to bacitracin. The protein is Undecaprenyl-diphosphatase of Porphyromonas gingivalis (strain ATCC 33277 / DSM 20709 / CIP 103683 / JCM 12257 / NCTC 11834 / 2561).